Here is a 348-residue protein sequence, read N- to C-terminus: Uroporphyrinogen decarboxylase (348 aa).

Residues 28–32 (RQAGR), Asp78, Tyr154, Thr209, and His325 contribute to the substrate site.

This sequence belongs to the uroporphyrinogen decarboxylase family. In terms of assembly, homodimer.

It localises to the cytoplasm. It catalyses the reaction uroporphyrinogen III + 4 H(+) = coproporphyrinogen III + 4 CO2. The protein operates within porphyrin-containing compound metabolism; protoporphyrin-IX biosynthesis; coproporphyrinogen-III from 5-aminolevulinate: step 4/4. Functionally, catalyzes the decarboxylation of four acetate groups of uroporphyrinogen-III to yield coproporphyrinogen-III. The protein is Uroporphyrinogen decarboxylase of Rhodopseudomonas palustris (strain BisB5).